A 137-amino-acid polypeptide reads, in one-letter code: Phosphoribosyl-AMP cyclohydrolase (137 aa).

Aspartate 84 is a binding site for Mg(2+). A Zn(2+)-binding site is contributed by cysteine 85. Positions 86 and 88 each coordinate Mg(2+). Residues cysteine 101 and cysteine 108 each coordinate Zn(2+).

Belongs to the PRA-CH family. As to quaternary structure, homodimer. Requires Mg(2+) as cofactor. The cofactor is Zn(2+).

Its subcellular location is the cytoplasm. The enzyme catalyses 1-(5-phospho-beta-D-ribosyl)-5'-AMP + H2O = 1-(5-phospho-beta-D-ribosyl)-5-[(5-phospho-beta-D-ribosylamino)methylideneamino]imidazole-4-carboxamide. The protein operates within amino-acid biosynthesis; L-histidine biosynthesis; L-histidine from 5-phospho-alpha-D-ribose 1-diphosphate: step 3/9. Catalyzes the hydrolysis of the adenine ring of phosphoribosyl-AMP. The polypeptide is Phosphoribosyl-AMP cyclohydrolase (Chlorobium phaeobacteroides (strain DSM 266 / SMG 266 / 2430)).